The following is a 1060-amino-acid chain: CCR4-NOT transcriptional complex subunit CAF120 (1060 aa).

A PH domain is found at 75–204 (RRYHEGVFLI…WNSAIRLCLY (130 aa)). Positions 465 to 481 (KLSYGSKSSSNNSSKNS) are enriched in low complexity. 3 disordered regions span residues 465 to 589 (KLSY…TSCG), 801 to 942 (EHRS…NMQA), and 955 to 1060 (QQPN…PYAQ). Positions 490–504 (LSSSSEQDLNNSDSP) are enriched in polar residues. Phosphoserine occurs at positions 491, 510, 518, 538, and 556. Composition is skewed to basic and acidic residues over residues 571 to 589 (NDRKATTPEKFERGETSCG) and 801 to 814 (EHRSRHEVPKRSPE). Residues 845 to 883 (SITPQRGQPVPSGQQISSYVQPANINSPNKMYGANNSAM) are compositionally biased toward polar residues. Phosphoserine occurs at positions 871 and 885. 3 stretches are compositionally biased toward polar residues: residues 900–923 (QGWNNRPSPSNIYQRPHPSDTQPQ), 931–942 (PYSTGNRPNMQA), and 1048–1060 (FMPSATTKNPYAQ).

It belongs to the CAF120 family. As to quaternary structure, subunit of the 1.0 MDa CCR4-NOT core complex that contains CCR4, CAF1, CAF120, NOT1, NOT2, NOT3, NOT4, NOT5, CAF40 and CAF130. In the complex interacts with NOT1. The core complex probably is part of a less characterized 1.9 MDa CCR4-NOT complex.

Its subcellular location is the cytoplasm. It localises to the nucleus. The protein localises to the bud neck. Its function is as follows. Acts as a component of the CCR4-NOT core complex, which in the nucleus seems to be a general transcription factor, and in the cytoplasm the major mRNA deadenylase involved in mRNA turnover. The NOT protein subcomplex negatively regulates the basal and activated transcription of many genes. Preferentially affects TC-type TATA element-dependent transcription. Could directly or indirectly inhibit component(s) of the general transcription machinery. The polypeptide is CCR4-NOT transcriptional complex subunit CAF120 (CAF120) (Saccharomyces cerevisiae (strain ATCC 204508 / S288c) (Baker's yeast)).